Reading from the N-terminus, the 159-residue chain is Stress-induced protein 1 (159 aa).

In terms of domain architecture, sHSP spans 33-141 (NNFNNIVPQQ…TVRALPIHTS (109 aa)).

It belongs to the small heat shock protein (HSP20) family.

The chain is Stress-induced protein 1 from Caenorhabditis elegans.